The sequence spans 177 residues: Translation initiation factor IF-3 (177 aa).

This sequence belongs to the IF-3 family. Monomer.

Its subcellular location is the cytoplasm. In terms of biological role, IF-3 binds to the 30S ribosomal subunit and shifts the equilibrium between 70S ribosomes and their 50S and 30S subunits in favor of the free subunits, thus enhancing the availability of 30S subunits on which protein synthesis initiation begins. In Rhizobium meliloti (strain 1021) (Ensifer meliloti), this protein is Translation initiation factor IF-3.